The primary structure comprises 229 residues: Urease accessory protein UreF (229 aa).

The protein belongs to the UreF family. In terms of assembly, ureD, UreF and UreG form a complex that acts as a GTP-hydrolysis-dependent molecular chaperone, activating the urease apoprotein by helping to assemble the nickel containing metallocenter of UreC. The UreE protein probably delivers the nickel.

The protein resides in the cytoplasm. Functionally, required for maturation of urease via the functional incorporation of the urease nickel metallocenter. This Staphylococcus aureus (strain bovine RF122 / ET3-1) protein is Urease accessory protein UreF.